Here is a 140-residue protein sequence, read N- to C-terminus: MGYESMLADIKSSLNGKISDVEDKIEKLKKAKKDIDTLQEEAITEIKEIVKPELGKHWTGTKADDFDKGREEAKSEASKIVNDKYNEYMASINGKIFDLEWDKAKYASELFIANGAADLLKKGEEFAEEVGNTISKLKWW.

The stretch at 6 to 51 (MLADIKSSLNGKISDVEDKIEKLKKAKKDIDTLQEEAITEIKEIVK) forms a coiled coil.

This Bacillus subtilis (strain 168) protein is Protein YwqH (ywqH).